The sequence spans 427 residues: MSAKWEKKGTNDGVLTFSIEQAVIEKGLTQAFNKVKKNLNVPGFRKGKVSRTVFNRMYGEEALYEDALNAVLPEAYEAAVLEAGIEPVAQPKIDVESMNKGEDWVITAEVTVKPEVKLGEYKNLTVSKQDREVTDEDVEARLKREQESQAELVIKEDAAAENGDTVVIDFEGFLGDEAFEGGKGENYSLELGSNSFIPGFEDQLVGKKAGEEVEVNVTFPEDYQAEDLAGKEAVFKVTVHEVKAKELPELDDEFAKDVDDSVESLDELKEKFRKELTEAKEAAAEEAKDEEAIRLAVENAEIVELPHVMVHDEVHRSMDEFLNNMQRQGISPEMYYQLTGSTEEDLHKQFEGEAETRTKTNLVIEAVAKAENIEVTQEDIDAEVKDLAEQYNMPEAQVRKVLNNDMLEHDIRMKRAVETITETAVEK.

One can recognise a PPIase FKBP-type domain in the interval 163–248 (GDTVVIDFEG…VHEVKAKELP (86 aa)).

The protein belongs to the FKBP-type PPIase family. Tig subfamily.

It localises to the cytoplasm. The catalysed reaction is [protein]-peptidylproline (omega=180) = [protein]-peptidylproline (omega=0). In terms of biological role, involved in protein export. Acts as a chaperone by maintaining the newly synthesized protein in an open conformation. Functions as a peptidyl-prolyl cis-trans isomerase. The sequence is that of Trigger factor from Enterococcus faecalis (strain ATCC 700802 / V583).